Here is a 200-residue protein sequence, read N- to C-terminus: Riboflavin synthase (200 aa).

Lumazine-binding repeat units lie at residues 1–97 (MFSG…IGGH) and 98–190 (LLSG…VDTV). Residues 4–6 (GII), 48–50 (CLT), 62–67 (DVIPET), 101–103 (GHV), lysine 132, 141–143 (SLT), and 155–160 (GLIPET) each bind 2,4-dihydroxypteridine.

Homotrimer.

The catalysed reaction is 2 6,7-dimethyl-8-(1-D-ribityl)lumazine + H(+) = 5-amino-6-(D-ribitylamino)uracil + riboflavin. The protein operates within cofactor biosynthesis; riboflavin biosynthesis; riboflavin from 2-hydroxy-3-oxobutyl phosphate and 5-amino-6-(D-ribitylamino)uracil: step 2/2. Catalyzes the dismutation of two molecules of 6,7-dimethyl-8-ribityllumazine, resulting in the formation of riboflavin and 5-amino-6-(D-ribitylamino)uracil. The protein is Riboflavin synthase (ribE) of Chlamydia pneumoniae (Chlamydophila pneumoniae).